Here is a 350-residue protein sequence, read N- to C-terminus: Histidinol-phosphate aminotransferase 1 (350 aa).

Lysine 211 is subject to N6-(pyridoxal phosphate)lysine.

Belongs to the class-II pyridoxal-phosphate-dependent aminotransferase family. Histidinol-phosphate aminotransferase subfamily. In terms of assembly, homodimer. Pyridoxal 5'-phosphate serves as cofactor.

The catalysed reaction is L-histidinol phosphate + 2-oxoglutarate = 3-(imidazol-4-yl)-2-oxopropyl phosphate + L-glutamate. The protein operates within amino-acid biosynthesis; L-histidine biosynthesis; L-histidine from 5-phospho-alpha-D-ribose 1-diphosphate: step 7/9. In Trichormus variabilis (strain ATCC 29413 / PCC 7937) (Anabaena variabilis), this protein is Histidinol-phosphate aminotransferase 1.